We begin with the raw amino-acid sequence, 353 residues long: Thiamine-phosphate synthase (353 aa).

The interval Met-1–Gly-128 is unknown. The interval Leu-129–Ala-353 is thiamine-phosphate synthase. 4-amino-2-methyl-5-(diphosphooxymethyl)pyrimidine contacts are provided by residues Gln-185–Lys-189 and Asn-217. Asp-218 and Asp-237 together coordinate Mg(2+). Ser-256 serves as a coordination point for 4-amino-2-methyl-5-(diphosphooxymethyl)pyrimidine. Thr-282 to Thr-284 is a 2-[(2R,5Z)-2-carboxy-4-methylthiazol-5(2H)-ylidene]ethyl phosphate binding site. Lys-285 contacts 4-amino-2-methyl-5-(diphosphooxymethyl)pyrimidine. Residue Gly-312 coordinates 2-[(2R,5Z)-2-carboxy-4-methylthiazol-5(2H)-ylidene]ethyl phosphate.

It belongs to the thiamine-phosphate synthase family. Mg(2+) serves as cofactor.

The enzyme catalyses 2-[(2R,5Z)-2-carboxy-4-methylthiazol-5(2H)-ylidene]ethyl phosphate + 4-amino-2-methyl-5-(diphosphooxymethyl)pyrimidine + 2 H(+) = thiamine phosphate + CO2 + diphosphate. It catalyses the reaction 2-(2-carboxy-4-methylthiazol-5-yl)ethyl phosphate + 4-amino-2-methyl-5-(diphosphooxymethyl)pyrimidine + 2 H(+) = thiamine phosphate + CO2 + diphosphate. It carries out the reaction 4-methyl-5-(2-phosphooxyethyl)-thiazole + 4-amino-2-methyl-5-(diphosphooxymethyl)pyrimidine + H(+) = thiamine phosphate + diphosphate. Its pathway is cofactor biosynthesis; thiamine diphosphate biosynthesis; thiamine phosphate from 4-amino-2-methyl-5-diphosphomethylpyrimidine and 4-methyl-5-(2-phosphoethyl)-thiazole: step 1/1. Condenses 4-methyl-5-(beta-hydroxyethyl)thiazole monophosphate (THZ-P) and 2-methyl-4-amino-5-hydroxymethyl pyrimidine pyrophosphate (HMP-PP) to form thiamine monophosphate (TMP). The sequence is that of Thiamine-phosphate synthase from Synechococcus sp. (strain CC9311).